A 247-amino-acid chain; its full sequence is Carboxy-S-adenosyl-L-methionine synthase (247 aa).

Residues Tyr39, 64 to 66 (GCS), 89 to 90 (DN), 117 to 118 (DI), Asn132, and Arg199 contribute to the S-adenosyl-L-methionine site.

Belongs to the class I-like SAM-binding methyltransferase superfamily. Cx-SAM synthase family. As to quaternary structure, homodimer.

The catalysed reaction is prephenate + S-adenosyl-L-methionine = carboxy-S-adenosyl-L-methionine + 3-phenylpyruvate + H2O. In terms of biological role, catalyzes the conversion of S-adenosyl-L-methionine (SAM) to carboxy-S-adenosyl-L-methionine (Cx-SAM). This Escherichia coli O127:H6 (strain E2348/69 / EPEC) protein is Carboxy-S-adenosyl-L-methionine synthase.